We begin with the raw amino-acid sequence, 116 residues long: Methionine-R-sulfoxide reductase B1 (116 aa).

One can recognise a MsrB domain in the interval 1–106 (MSFCSFFGGE…FSSSLKFVPK (106 aa)). Positions 23, 26, 71, and 74 each coordinate Zn(2+). U95 functions as the Nucleophile in the catalytic mechanism. A non-standard amino acid (selenocysteine) is located at residue U95.

It belongs to the MsrB Met sulfoxide reductase family. Zn(2+) serves as cofactor. Truncated MSRB1/SEPX1 proteins produced by failed UGA/Sec decoding are ubiquitinated by the CRL2(FEM1C) E3 ubiquitin-protein ligase complex.

The protein localises to the cytoplasm. It is found in the nucleus. The protein resides in the cytoskeleton. The catalysed reaction is L-methionyl-[protein] + [thioredoxin]-disulfide + H2O = L-methionyl-(R)-S-oxide-[protein] + [thioredoxin]-dithiol. It catalyses the reaction [thioredoxin]-disulfide + L-methionine + H2O = L-methionine (R)-S-oxide + [thioredoxin]-dithiol. Methionine-sulfoxide reductase that specifically reduces methionine (R)-sulfoxide back to methionine. While in many cases, methionine oxidation is the result of random oxidation following oxidative stress, methionine oxidation is also a post-translational modification that takes place on specific residue. Acts as a regulator of actin assembly by reducing methionine (R)-sulfoxide mediated by MICALs (MICAL1, MICAL2 or MICAL3) on actin, thereby promoting filament repolymerization. Plays a role in innate immunity by reducing oxidized actin, leading to actin repolymerization in macrophages. The chain is Methionine-R-sulfoxide reductase B1 (MSRB1) from Pongo abelii (Sumatran orangutan).